Consider the following 594-residue polypeptide: MTMATTAMNVSVPPPDEEEQLLAKFVFGDTTDLQENLAKFNADFIFNEQEMDVEDQEDEGSESDNSEEDEAQNGELDHVNNDQLFFVDDGGNEDSQDKNEDTMDVDDEDDSSSDDYSEDSEEAAWIDSDDEKIKVPILVTNKTKKLRTSYNESKINGVHYINRLRSQFEKIYPRPKWVDDESDSELDDEEDDEEEGSNNVINGDINALTKILSTTYNYKDTLSNSKLLPPKKLDIVRLKDANASHPSHSAIQSLSFHPSKPLLLTGGYDKTLRIYHIDGKTNHLVTSLHLVGSPIQTCTFYTSLSNQNQQNIFTAGRRRYMHSWDLSLENLTHSQTAKIEKFSRLYGHESTQRSFENFKVAHLQNSQTNSVHGIVLLQGNNGWINILHSTSGLWLMGCKIEGVITDFCIDYQPISRGKFRTILIAVNAYGEVWEFDLNKNGHVIRRWKDQGGVGITKIQVGGGTTTTCPALQISKIKQNRWLAVGSESGFVNLYDRNNAMTSSTPTPVAALDQLTTTISNLQFSPDGQILCMASRAVKDALRLVHLPSCSVFSNWPTSGTPLGKVTSVAFSPSGGLLAVGNEQGKVRLWKLNHY.

2 disordered regions span residues 48–128 (EQEM…WIDS) and 176–200 (KWVD…SNNV). Acidic residues-rich tracts occupy residues 49–72 (QEMD…DEAQ), 102–128 (TMDV…WIDS), and 180–196 (DESD…EEEG). The segment at 101-190 (DTMDVDDEDD…ESDSELDDEE (90 aa)) is interaction with UTP21. Serine 182 and serine 184 each carry phosphoserine. WD repeat units follow at residues 246–285 (PSHS…NHLV), 290–334 (LVGS…LTHS), 463–504 (GTTT…TSST), 513–554 (QLTT…VFSN), and 560–593 (TPLG…KLNH).

This sequence belongs to the WD repeat UTP18 family. As to quaternary structure, interacts with snoRNA U3. Interacts with MPP10, UTP21 and UTP25. Component of the ribosomal small subunit (SSU) processome composed of at least 40 protein subunits and snoRNA U3.

It is found in the nucleus. It localises to the nucleolus. Functionally, involved in nucleolar processing of pre-18S ribosomal RNA and ribosome assembly. The chain is U3 small nucleolar RNA-associated protein 18 (UTP18) from Saccharomyces cerevisiae (strain ATCC 204508 / S288c) (Baker's yeast).